The primary structure comprises 313 residues: 2-phosphoglycerate kinase (313 aa).

In terms of domain architecture, ATP-cone spans 8–95 (SRILVKDKEY…LWRRVLKKHS (88 aa)).

This sequence belongs to the 2-phosphoglycerate kinase family. Requires a divalent metal cation as cofactor.

The catalysed reaction is (2R)-2-phosphoglycerate + ATP = (2R)-2,3-bisphosphoglycerate + ADP + H(+). Its pathway is thermoadapter biosynthesis; cyclic 2,3-diphosphoglycerate biosynthesis; cyclic 2,3-diphosphoglycerate from 2-phospho-D-glycerate: step 1/2. Its function is as follows. Catalyzes the phosphorylation of 2-phosphoglycerate to 2,3-diphosphoglycerate. Involved in the biosynthesis of cyclic 2,3-bisphosphoglycerate, a thermoprotectant. The protein is 2-phosphoglycerate kinase of Methanococcus maripaludis (strain C5 / ATCC BAA-1333).